Here is a 183-residue protein sequence, read N- to C-terminus: Translation initiation factor IF-3 (183 aa).

It belongs to the IF-3 family. Monomer.

The protein localises to the cytoplasm. Its function is as follows. IF-3 binds to the 30S ribosomal subunit and shifts the equilibrium between 70S ribosomes and their 50S and 30S subunits in favor of the free subunits, thus enhancing the availability of 30S subunits on which protein synthesis initiation begins. The sequence is that of Translation initiation factor IF-3 from Vibrio cholerae serotype O1 (strain ATCC 39315 / El Tor Inaba N16961).